The chain runs to 85 residues: UPF0386 protein VF_0869 (85 aa).

It belongs to the UPF0386 family.

This chain is UPF0386 protein VF_0869, found in Aliivibrio fischeri (strain ATCC 700601 / ES114) (Vibrio fischeri).